The primary structure comprises 306 residues: Pantothenate kinase (306 aa).

Residue 91–98 (GSVAVGKS) participates in ATP binding.

Belongs to the prokaryotic pantothenate kinase family.

It localises to the cytoplasm. The enzyme catalyses (R)-pantothenate + ATP = (R)-4'-phosphopantothenate + ADP + H(+). It functions in the pathway cofactor biosynthesis; coenzyme A biosynthesis; CoA from (R)-pantothenate: step 1/5. The protein is Pantothenate kinase of Streptococcus suis (strain 05ZYH33).